Reading from the N-terminus, the 224-residue chain is uncharacterized protein (224 aa).

The presence of the two linear plasmids, termed pGKL1 and pGKL2, in strains of Kluyveromyces lactis confers the killer phenotype to the host cell, by promoting the secretion of a toxin able to inhibit the growth of sensitive strains. This is an uncharacterized protein from Kluyveromyces lactis (strain ATCC 8585 / CBS 2359 / DSM 70799 / NBRC 1267 / NRRL Y-1140 / WM37) (Yeast).